A 367-amino-acid polypeptide reads, in one-letter code: Putrescine/agmatine-binding protein (367 aa).

The first 19 residues, 1-19, serve as a signal peptide directing secretion; it reads MKKVCALALSILTTIGATA.

This sequence belongs to the bacterial solute-binding protein 1 family.

The protein resides in the periplasm. Functionally, binds putrescine and agmatine. This is Putrescine/agmatine-binding protein from Pseudomonas aeruginosa (strain ATCC 15692 / DSM 22644 / CIP 104116 / JCM 14847 / LMG 12228 / 1C / PRS 101 / PAO1).